Here is a 631-residue protein sequence, read N- to C-terminus: Bromodomain-containing protein 9 (631 aa).

2 disordered regions span residues 1-26 (MGKK…PLEK) and 39-116 (VTEL…TLPK). Basic and acidic residues-rich tracts occupy residues 9 to 26 (RPEW…PLEK) and 50 to 63 (SYYD…WERH). Basic residues predominate over residues 64–73 (KEKKKKKKKK). Positions 74–85 (SEKEKYADDDER) are enriched in basic and acidic residues. Over residues 86 to 96 (RRRKEEKKKKR) the composition is skewed to basic residues. Positions 166 to 270 (NEATPHQQLL…HTGFKMMSKQ (105 aa)) constitute a Bromo domain. The tract at residues 244-246 (VYN) is histone H4K5ac H4K8ac and histone H4K5bu H4K8bu binding. The tract at residues 571–631 (ASVDRVGSRP…SPEPGSTANS (61 aa)) is disordered. A compositionally biased stretch (low complexity) spans 581 to 590 (SSNLSSLSNA).

Binds acetylated histones H3 and H4. Binds butyrylated histone H4.

Its subcellular location is the nucleus. In terms of biological role, plays a role in chromatin remodeling and regulation of transcription. Acts as a chromatin reader that recognizes and binds acylated histones: binds histones that are acetylated and/or butyrylated. The polypeptide is Bromodomain-containing protein 9 (brd9) (Danio rerio (Zebrafish)).